We begin with the raw amino-acid sequence, 309 residues long: Olfactory receptor 5H2 (309 aa).

The Extracellular portion of the chain corresponds to 1–28 (MEQDNTTLLTEFVLTGLTYQPEWKMPLF). Asn5 is a glycosylation site (N-linked (GlcNAc...) asparagine). A helical membrane pass occupies residues 29–49 (LVFLVIYLITIVWNLGLIALI). Topologically, residues 50-56 (WNDPQLH) are cytoplasmic. Residues 57–77 (IPMYFFLGSLAFVDAWISSTV) form a helical membrane-spanning segment. Residues 78 to 97 (TPKMLVNFLAKNRMISLSEC) are Extracellular-facing. The cysteines at positions 97 and 179 are disulfide-linked. Residues 98-118 (MIQFFSFAFGGTTECFLLATM) traverse the membrane as a helical segment. The Cytoplasmic portion of the chain corresponds to 119–143 (AYDRYVAICKPLLYPVIMNNSLCIR). The chain crosses the membrane as a helical span at residues 144–164 (LLAFSFLGGFLHALIHEVLIF). The Extracellular portion of the chain corresponds to 165–193 (RLTFCNSNIIHHFYCDIIPLFMISCTDPS). Residues 194–214 (INFLMVFILSGSIQVFTIVTV) traverse the membrane as a helical segment. Residues 215–239 (LNSYTFALFTILKKKSVRGVRKAFS) are Cytoplasmic-facing. Residues 240-260 (TCGAHLLSVSLYYGPLIFMYL) form a helical membrane-spanning segment. Residues 261 to 271 (RPASPQADDQD) lie on the Extracellular side of the membrane. Residues 272–292 (MIDSVFYTIIIPLLNPIIYSL) form a helical membrane-spanning segment. At 293–309 (RNKQVIDSFTKMVKRNV) the chain is on the cytoplasmic side.

This sequence belongs to the G-protein coupled receptor 1 family.

The protein resides in the cell membrane. Odorant receptor. This is Olfactory receptor 5H2 (OR5H2) from Homo sapiens (Human).